We begin with the raw amino-acid sequence, 689 residues long: Glycine--tRNA ligase beta subunit (689 aa).

Belongs to the class-II aminoacyl-tRNA synthetase family. In terms of assembly, tetramer of two alpha and two beta subunits.

Its subcellular location is the cytoplasm. The catalysed reaction is tRNA(Gly) + glycine + ATP = glycyl-tRNA(Gly) + AMP + diphosphate. This is Glycine--tRNA ligase beta subunit from Coxiella burnetii (strain RSA 331 / Henzerling II).